A 902-amino-acid polypeptide reads, in one-letter code: MLKIITRQLFARLNRHLPYRLVHRDPLPGAQTAVNATIPPSLSERCLKVAAMEQETLWRVFDTHPEGLNAAEVTRAREKHGENRLPAQKPSPWWVHLWVCYRNPFNILLTILGGISYATEDLFAAGVIALMVGISTLLNFVQEARSTKAADALKAMVSNTATVLRVINENGENAWLELPIDQLVPGDIIKLAAGDMIPADLRIIQARDLFVAQASLTGESLPVEKVAATREPRQNNPLECDTLCFMGTNVVSGTAQAVVMATGAGTWFGQLAGRVSEQDNEQNAFQKGISRVSMLLIRFMLVMAPVVLIINGYTKGDWWEAALFALSVAVGLTPEMLPMIVTSTLARGAVKLSKQKVIVKHLDAIQNFGAMDILCTDKTGTLTQDKIVLENHTDISGKPSEHVLHCAWLNSHYQTGLKNLLDTAVLEGVDETAARQLSGRWQKIDEIPFDFERRRMSVVVAEDSNVHQLVCKGALQEILNVCTQVRHNGDIVPLDDNMLRRVKRVTDTLNRQGLRVVAVATKYLPAREGDYQRIDESDLILEGYIAFLDPPKETTAPALKALKASGITVKILTGDSELVAAKVCHEVGLDAGDVIIGSDIEGLSDDALAALAARTTLFARLTPMHKERIVTLLKREGHVVGFMGDGINDAPALRAADIGISVDGAVDIAREAADIILLEKSLMVLEEGVIEGRRTFSNMLKYIKMTASSNFGNVFSVLVASAFLPFLPMLPLHLLIQNLLYDVSQVAIPFDNVDEEQIQKPQRWNPADLGRFMVFFGPISSIFDILTFCLMWWVFHANTPETQTLFQSGWFVVGLLSQTLIVHMIRTRRLPFIQSRAAWPLMAMTLLVMVVGVSLPFSPLASYLQLQALPLSYFPWLIAILVGYMTLTQLVKGFYSRRYGWQ.

The Cytoplasmic portion of the chain corresponds to 1–98; the sequence is MLKIITRQLF…KPSPWWVHLW (98 aa). The helical transmembrane segment at 99–119 threads the bilayer; it reads VCYRNPFNILLTILGGISYAT. Position 120 (Glu-120) is a topological domain, extracellular. A helical membrane pass occupies residues 121 to 141; the sequence is DLFAAGVIALMVGISTLLNFV. Residues 142–291 are Cytoplasmic-facing; the sequence is QEARSTKAAD…QNAFQKGISR (150 aa). The chain crosses the membrane as a helical span at residues 292–312; it reads VSMLLIRFMLVMAPVVLIING. The Extracellular portion of the chain corresponds to 313 to 321; sequence YTKGDWWEA. Residues 322-339 traverse the membrane as a helical segment; it reads ALFALSVAVGLTPEMLPM. Glu-335 contributes to the Mg(2+) binding site. Residues 340–699 lie on the Cytoplasmic side of the membrane; sequence IVTSTLARGA…IEGRRTFSNM (360 aa). Asp-377 functions as the 4-aspartylphosphate intermediate in the catalytic mechanism. Mg(2+) is bound by residues Asp-645, Asp-649, and Asn-713. Residues 700–719 traverse the membrane as a helical segment; it reads LKYIKMTASSNFGNVFSVLV. Residues 720 to 728 are Extracellular-facing; that stretch reads ASAFLPFLP. The chain crosses the membrane as a helical span at residues 729 to 748; the sequence is MLPLHLLIQNLLYDVSQVAI. The Mg(2+) site is built by Asn-738 and Asp-742. Residues 749-770 are Cytoplasmic-facing; that stretch reads PFDNVDEEQIQKPQRWNPADLG. The helical transmembrane segment at 771–794 threads the bilayer; sequence RFMVFFGPISSIFDILTFCLMWWV. The Extracellular segment spans residues 795–803; sequence FHANTPETQ. A helical membrane pass occupies residues 804–822; sequence TLFQSGWFVVGLLSQTLIV. The Cytoplasmic portion of the chain corresponds to 823–835; sequence HMIRTRRLPFIQS. A helical membrane pass occupies residues 836 to 855; the sequence is RAAWPLMAMTLLVMVVGVSL. Residues 856–870 are Extracellular-facing; that stretch reads PFSPLASYLQLQALP. The chain crosses the membrane as a helical span at residues 871 to 890; sequence LSYFPWLIAILVGYMTLTQL. Residues 891–902 lie on the Cytoplasmic side of the membrane; sequence VKGFYSRRYGWQ.

The protein belongs to the cation transport ATPase (P-type) (TC 3.A.3) family. Type IIIB subfamily.

It is found in the cell inner membrane. It carries out the reaction Mg(2+)(out) + ATP + H2O = Mg(2+)(in) + ADP + phosphate + H(+). Functionally, mediates magnesium influx to the cytosol. The sequence is that of Magnesium-transporting ATPase, P-type 1 (mgtA) from Salmonella typhimurium (strain 14028s / SGSC 2262).